A 112-amino-acid polypeptide reads, in one-letter code: uncharacterized protein (112 aa).

The chain crosses the membrane as a helical span at residues 62 to 82 (THSFIFFILFLFIFIFLTFSH).

The protein localises to the membrane. This is an uncharacterized protein from Saccharomyces cerevisiae (strain ATCC 204508 / S288c) (Baker's yeast).